Consider the following 218-residue polypeptide: Ras-related protein Rab11D (218 aa).

Residue 20 to 27 (GDSGVGKS) coordinates GTP. The short motif at 42-50 (SKSTIGVEF) is the Effector region element. GTP is bound by residues 68-72 (DTAGQ) and 126-129 (NKSD). S-geranylgeranyl cysteine attachment occurs at residues C215 and C216.

Belongs to the small GTPase superfamily. Rab family.

The protein localises to the cell membrane. This is Ras-related protein Rab11D (RAB11D) from Lotus japonicus (Lotus corniculatus var. japonicus).